The following is a 94-amino-acid chain: Acylphosphatase (94 aa).

Positions 6-92 constitute an Acylphosphatase-like domain; it reads RVHVWIRGRV…EGLPTFEIRP (87 aa). Catalysis depends on residues Arg-21 and Asn-39.

Belongs to the acylphosphatase family.

It catalyses the reaction an acyl phosphate + H2O = a carboxylate + phosphate + H(+). This is Acylphosphatase (acyP) from Synechococcus sp. (strain JA-2-3B'a(2-13)) (Cyanobacteria bacterium Yellowstone B-Prime).